The following is an 826-amino-acid chain: Glycerol-3-phosphate acyltransferase 1, mitochondrial (826 aa).

Over 1 to 87 (MDESALTLGT…FFNPSIPSLG (87 aa)) the chain is Cytoplasmic. Positions 80–120 (NPSIPSLGLRNVIYINETHTRHRGWLARRLSYVLFIQERDV) are important for mitochondrial localization. Residues 88–118 (LRNVIYINETHTRHRGWLARRLSYVLFIQER) lie within the membrane without spanning it. The Cytoplasmic portion of the chain corresponds to 119 to 826 (DVHKGMFATN…LEYILSFVVL (708 aa)). An HXXXXD motif motif is present at residues 230–235 (HRSHID). The CoA site is built by Arg-278, Arg-279, Lys-288, Arg-293, and Arg-328. Ser-380 is subject to Phosphoserine. Residue Arg-462 participates in CoA binding. Ser-686 and Ser-693 each carry phosphoserine. N6-acetyllysine is present on residues Lys-778 and Lys-782.

Belongs to the GPAT/DAPAT family.

The protein resides in the mitochondrion outer membrane. The catalysed reaction is sn-glycerol 3-phosphate + an acyl-CoA = a 1-acyl-sn-glycero-3-phosphate + CoA. The enzyme catalyses (9Z,12Z)-octadecadienoyl-CoA + sn-glycerol 3-phosphate = 1-(9Z,12Z)-octadecadienoyl-sn-glycero-3-phosphate + CoA. It carries out the reaction sn-glycerol 3-phosphate + (9Z)-octadecenoyl-CoA = 1-(9Z-octadecenoyl)-sn-glycero-3-phosphate + CoA. It catalyses the reaction sn-glycerol 3-phosphate + octadecanoyl-CoA = 1-octadecanoyl-sn-glycero-3-phosphate + CoA. The catalysed reaction is sn-glycerol 3-phosphate + hexadecanoyl-CoA = 1-hexadecanoyl-sn-glycero-3-phosphate + CoA. The enzyme catalyses dodecanoyl-CoA + sn-glycerol 3-phosphate = 1-dodecanoyl-sn-glycerol 3-phosphate + CoA. It carries out the reaction 1-acyl-sn-glycero-3-phospho-(1'-sn-glycerol) + an acyl-CoA = a 1,2-diacyl-sn-glycero-3-phospho-(1'-sn-glycerol) + CoA. It participates in phospholipid metabolism; CDP-diacylglycerol biosynthesis; CDP-diacylglycerol from sn-glycerol 3-phosphate: step 1/3. Functionally, mitochondrial membrane protein that catalyzes the essential first step of biosynthesis of glycerolipids such as triglycerides, phosphatidic acids and lysophosphatidic acids. Esterifies acyl-group from acyl-coenzyme A (acyl-CoA) to the sn-1 position of glycerol-3-phosphate, to produce lysophosphatidic acid. Has a narrow hydrophobic binding cleft that selects for a linear acyl chain. Catalytic activity is higher for substrates with a 16-carbon acyl chain. This is Glycerol-3-phosphate acyltransferase 1, mitochondrial from Sus scrofa (Pig).